Consider the following 321-residue polypeptide: DNA repair and recombination protein RadA (321 aa).

111–118 (GEFGSGKT) serves as a coordination point for ATP.

It belongs to the eukaryotic RecA-like protein family.

Involved in DNA repair and in homologous recombination. Binds and assemble on single-stranded DNA to form a nucleoprotein filament. Hydrolyzes ATP in a ssDNA-dependent manner and promotes DNA strand exchange between homologous DNA molecules. The polypeptide is DNA repair and recombination protein RadA (Sulfolobus acidocaldarius (strain ATCC 33909 / DSM 639 / JCM 8929 / NBRC 15157 / NCIMB 11770)).